The sequence spans 271 residues: PH domain-containing protein ECU06_0670 (271 aa).

Residues 26–145 (AKKTLDSSES…EKKNDAFIPP (120 aa)) are disordered. 3 stretches are compositionally biased toward basic and acidic residues: residues 42–64 (EVGE…EPAM), 92–120 (QPEK…LLDK), and 128–140 (EENA…KKND). In terms of domain architecture, PH spans 166–267 (NTVVEGWMWK…WVEKLNETIR (102 aa)).

The polypeptide is PH domain-containing protein ECU06_0670 (Encephalitozoon cuniculi (strain GB-M1) (Microsporidian parasite)).